The primary structure comprises 259 residues: Leucyl/phenylalanyl-tRNA--protein transferase (259 aa).

It belongs to the L/F-transferase family.

It localises to the cytoplasm. It catalyses the reaction N-terminal L-lysyl-[protein] + L-leucyl-tRNA(Leu) = N-terminal L-leucyl-L-lysyl-[protein] + tRNA(Leu) + H(+). The catalysed reaction is N-terminal L-arginyl-[protein] + L-leucyl-tRNA(Leu) = N-terminal L-leucyl-L-arginyl-[protein] + tRNA(Leu) + H(+). It carries out the reaction L-phenylalanyl-tRNA(Phe) + an N-terminal L-alpha-aminoacyl-[protein] = an N-terminal L-phenylalanyl-L-alpha-aminoacyl-[protein] + tRNA(Phe). Functionally, functions in the N-end rule pathway of protein degradation where it conjugates Leu, Phe and, less efficiently, Met from aminoacyl-tRNAs to the N-termini of proteins containing an N-terminal arginine or lysine. In Teredinibacter turnerae (strain ATCC 39867 / T7901), this protein is Leucyl/phenylalanyl-tRNA--protein transferase.